We begin with the raw amino-acid sequence, 754 residues long: Disintegrin and metalloproteinase domain-containing protein 7 (754 aa).

A signal peptide spans 1 to 18; that stretch reads MLPGCIFLMILLIPQVKE. A propeptide spanning residues 19-176 is cleaved from the precursor; that stretch reads KFILGVEGQQ…NYSCTELNFT (158 aa). The Extracellular segment spans residues 19–668; sequence KFILGVEGQQ…ACEETLHVTN (650 aa). N-linked (GlcNAc...) asparagine glycosylation is found at Asn84, Asn167, Asn174, and Asn184. The Peptidase M12B domain occupies 199-394; it reads KYVELFIVAD…YKPTCMLNIP (196 aa). 4 disulfides stabilise this stretch: Cys310–Cys389, Cys350–Cys373, Cys352–Cys357, and Cys460–Cys480. Residues 402–488 form the Disintegrin domain; the sequence is FQFCGNKKLD…ACPKDQFRVN (87 aa). 2 N-linked (GlcNAc...) asparagine glycosylation sites follow: Asn584 and Asn668. A helical membrane pass occupies residues 669–689; that stretch reads ITILVVVLVLVIVGIGVLILL. The Cytoplasmic portion of the chain corresponds to 690–754; it reads VRYRKCIKLK…GIADPNQSAK (65 aa).

In terms of assembly, interacts with ITM2B in sperm; the interaction increases following capacitation. Interacts with HSPA5 and CANX.

It is found in the membrane. Functionally, required for normal male fertility via maintenance of epithelial cell morphology in the caput epididymis and subsequently correct epididymis lumen structure required for sperm development. Plays a role in sperm motility, flagella morphology and tyrosine phosphorylation during sperm capacitance. Plays a role in normal expression levels of HSPA5, ITM2B and ADAM2 in sperm both prior to and post-capacitation. This is a non catalytic metalloprotease-like protein. The protein is Disintegrin and metalloproteinase domain-containing protein 7 of Homo sapiens (Human).